A 418-amino-acid chain; its full sequence is Actin-related protein 3 (418 aa).

Residue Met1 is modified to N-acetylmethionine.

The protein belongs to the actin family. ARP3 subfamily. As to quaternary structure, component of the Arp2/3 complex composed of arpB/Arp2, arpC/Arp3, arcA/p41-arc, arcB/p34-arc, arcC/p21-arc, arcD/p20-arc and arcE/p16-arc. Interacts with carmil (via the region between the LRR domain and COOH-terminal proline-rich domain); carmil is required for Arp2/3-dependent actin nucleation. Arp2/3 complex, MyoB, MyoC, and the alpha and beta subunits of capping protein all form a larger complex with carmil.

The protein resides in the cytoplasm. It is found in the cytoskeleton. The protein localises to the cytosol. It localises to the cell cortex. Its subcellular location is the cell projection. The protein resides in the pseudopodium. Its function is as follows. Functions as ATP-binding component of the Arp2/3 complex which is involved in regulation of actin polymerization and together with an activating nucleation-promoting factor (NPF) mediates the formation of branched actin networks. Seems to contact the pointed end of the daughter actin filament. The Arp2/3 complex is involved in organizing the actin system in cell motility and chemotaxis, in phagocytosis and macropinocytosis, at late steps of endosome processing, and in mitosis. In concert with a group of other proteins, the Arp2/3 complex plays a general role in the rapid activation and adaptation of the actin system to its multiple functions. In Dictyostelium discoideum (Social amoeba), this protein is Actin-related protein 3 (arpC).